Here is a 52-residue protein sequence, read N- to C-terminus: uncharacterized protein (52 aa).

A helical transmembrane segment spans residues 7–27 (MFQLFVFIIFAAVVFAAVTGF).

The protein resides in the membrane. This is an uncharacterized protein from Bacillus subtilis (strain 168).